Reading from the N-terminus, the 154-residue chain is 6,7-dimethyl-8-ribityllumazine synthase (154 aa).

5-amino-6-(D-ribitylamino)uracil contacts are provided by residues Phe22, 56–58 (AFE), and 81–83 (VLI). 86 to 87 (ET) provides a ligand contact to (2S)-2-hydroxy-3-oxobutyl phosphate. Residue His89 is the Proton donor of the active site. 5-amino-6-(D-ribitylamino)uracil is bound at residue Phe114. Arg128 contributes to the (2S)-2-hydroxy-3-oxobutyl phosphate binding site.

This sequence belongs to the DMRL synthase family.

The enzyme catalyses (2S)-2-hydroxy-3-oxobutyl phosphate + 5-amino-6-(D-ribitylamino)uracil = 6,7-dimethyl-8-(1-D-ribityl)lumazine + phosphate + 2 H2O + H(+). Its pathway is cofactor biosynthesis; riboflavin biosynthesis; riboflavin from 2-hydroxy-3-oxobutyl phosphate and 5-amino-6-(D-ribitylamino)uracil: step 1/2. In terms of biological role, catalyzes the formation of 6,7-dimethyl-8-ribityllumazine by condensation of 5-amino-6-(D-ribitylamino)uracil with 3,4-dihydroxy-2-butanone 4-phosphate. This is the penultimate step in the biosynthesis of riboflavin. The chain is 6,7-dimethyl-8-ribityllumazine synthase from Chlamydia abortus (strain DSM 27085 / S26/3) (Chlamydophila abortus).